The sequence spans 90 residues: Small ribosomal subunit protein uS15 (90 aa).

This sequence belongs to the universal ribosomal protein uS15 family. In terms of assembly, part of the 30S ribosomal subunit. Forms a bridge to the 50S subunit in the 70S ribosome, contacting the 23S rRNA.

One of the primary rRNA binding proteins, it binds directly to 16S rRNA where it helps nucleate assembly of the platform of the 30S subunit by binding and bridging several RNA helices of the 16S rRNA. Functionally, forms an intersubunit bridge (bridge B4) with the 23S rRNA of the 50S subunit in the ribosome. In Helicobacter hepaticus (strain ATCC 51449 / 3B1), this protein is Small ribosomal subunit protein uS15.